The chain runs to 124 residues: uncharacterized protein (124 aa).

This is an uncharacterized protein from Haemophilus influenzae (strain ATCC 51907 / DSM 11121 / KW20 / Rd).